Reading from the N-terminus, the 181-residue chain is GTP cyclohydrolase 1 2 (181 aa).

It belongs to the GTP cyclohydrolase I family. Homomer.

It catalyses the reaction GTP + H2O = 7,8-dihydroneopterin 3'-triphosphate + formate + H(+). It functions in the pathway cofactor biosynthesis; 7,8-dihydroneopterin triphosphate biosynthesis; 7,8-dihydroneopterin triphosphate from GTP: step 1/1. This Pseudomonas syringae pv. tomato (strain ATCC BAA-871 / DC3000) protein is GTP cyclohydrolase 1 2.